The sequence spans 324 residues: Ribonucleoside-diphosphate reductase subunit beta nrdF2 (324 aa).

The Fe cation site is built by Glu-103 and His-106. Residue Tyr-110 is part of the active site. 3 residues coordinate Fe cation: Glu-163, Glu-197, and His-200.

The protein belongs to the ribonucleoside diphosphate reductase small chain family. In terms of assembly, tetramer of two alpha and two beta subunits. The cofactor is Fe cation.

The enzyme catalyses a 2'-deoxyribonucleoside 5'-diphosphate + [thioredoxin]-disulfide + H2O = a ribonucleoside 5'-diphosphate + [thioredoxin]-dithiol. In terms of biological role, provides the precursors necessary for DNA synthesis. Catalyzes the biosynthesis of deoxyribonucleotides from the corresponding ribonucleotides. This is Ribonucleoside-diphosphate reductase subunit beta nrdF2 (nrdF2) from Mycobacterium tuberculosis (strain CDC 1551 / Oshkosh).